The chain runs to 329 residues: Malate dehydrogenase (329 aa).

Residue 12–18 (GAAGQIG) coordinates NAD(+). Substrate-binding residues include Arg95 and Arg101. NAD(+) is bound by residues Asn108, Gln115, and 132-134 (VGN). Substrate is bound by residues Asn134 and Arg165. Residue His190 is the Proton acceptor of the active site.

Belongs to the LDH/MDH superfamily. MDH type 2 family.

It catalyses the reaction (S)-malate + NAD(+) = oxaloacetate + NADH + H(+). Its function is as follows. Catalyzes the reversible oxidation of malate to oxaloacetate. This Polynucleobacter asymbioticus (strain DSM 18221 / CIP 109841 / QLW-P1DMWA-1) (Polynucleobacter necessarius subsp. asymbioticus) protein is Malate dehydrogenase.